A 358-amino-acid polypeptide reads, in one-letter code: Nicotinate-nucleotide--dimethylbenzimidazole phosphoribosyltransferase (358 aa).

The active-site Proton acceptor is the glutamate 314.

The protein belongs to the CobT family.

It carries out the reaction 5,6-dimethylbenzimidazole + nicotinate beta-D-ribonucleotide = alpha-ribazole 5'-phosphate + nicotinate + H(+). Its pathway is nucleoside biosynthesis; alpha-ribazole biosynthesis; alpha-ribazole from 5,6-dimethylbenzimidazole: step 1/2. Catalyzes the synthesis of alpha-ribazole-5'-phosphate from nicotinate mononucleotide (NAMN) and 5,6-dimethylbenzimidazole (DMB). The sequence is that of Nicotinate-nucleotide--dimethylbenzimidazole phosphoribosyltransferase from Mycobacterium ulcerans (strain Agy99).